Here is a 290-residue protein sequence, read N- to C-terminus: Ribosomal RNA small subunit methyltransferase A (290 aa).

The S-adenosyl-L-methionine site is built by N27, L29, G54, E75, D100, and N125.

Belongs to the class I-like SAM-binding methyltransferase superfamily. rRNA adenine N(6)-methyltransferase family. RsmA subfamily.

It is found in the cytoplasm. It catalyses the reaction adenosine(1518)/adenosine(1519) in 16S rRNA + 4 S-adenosyl-L-methionine = N(6)-dimethyladenosine(1518)/N(6)-dimethyladenosine(1519) in 16S rRNA + 4 S-adenosyl-L-homocysteine + 4 H(+). Specifically dimethylates two adjacent adenosines (A1518 and A1519) in the loop of a conserved hairpin near the 3'-end of 16S rRNA in the 30S particle. May play a critical role in biogenesis of 30S subunits. This Streptococcus agalactiae serotype V (strain ATCC BAA-611 / 2603 V/R) protein is Ribosomal RNA small subunit methyltransferase A.